The following is a 405-amino-acid chain: uncharacterized protein (405 aa).

The next 12 membrane-spanning stretches (helical) occupy residues 32–52 (MFVL…VLAG), 53–73 (WLTF…GVLL), 84–104 (IDMI…WLGW), 108–128 (PVVC…IAGI), 150–170 (AVYS…VGWL), 171–191 (GPEA…VCLS), 237–257 (WGAL…VAAG), 260–280 (VVGL…LLAG), 291–311 (IMTA…AEFG), 314–334 (GLTI…VAML), 352–372 (ISIS…GVVI), and 378–398 (AIFV…LSIP).

It belongs to the major facilitator superfamily.

The protein resides in the cell membrane. This is an uncharacterized protein from Sinorhizobium fredii (strain NBRC 101917 / NGR234).